Here is a 1127-residue protein sequence, read N- to C-terminus: Ras guanine nucleotide exchange factor F (1127 aa).

Disordered stretches follow at residues 1–82 (MTDK…SLLN) and 96–154 (NSGG…SSSS). 2 stretches are compositionally biased toward low complexity: residues 23 to 53 (NQPSPSTSTPASPNVNSTNNSPSVSPATTSP) and 67 to 82 (NNNNNTNIPHQTSLLN). Over residues 122 to 132 (RTSTTLAQFSG) the composition is skewed to polar residues. The segment covering 133–154 (SSLPNTENSSPPPSSSLISSSS) has biased composition (low complexity). Kelch repeat units lie at residues 212–261 (GFYL…LYNN), 262–311 (SMYI…VESG), 313–366 (MIVF…MHKG), 367–418 (NMYV…LFQD), and 420–469 (IFIS…VKGN). The LisH domain occupies 557–589 (SHQFVLQLIMEYLERNTYHKVIAAIQKESGVLH). Residues 673–804 (NKVQIKAATF…KLRELKKKLQ (132 aa)) form the N-terminal Ras-GEF domain. Positions 835–1062 (DELEIARQMT…YDLNLLSESL (228 aa)) constitute a Ras-GEF domain. The disordered stretch occupies residues 1090–1127 (LGSARELNNSNRDSNNITGSSSNNNSNSSNSLSPIVKL). The span at 1103-1127 (SNNITGSSSNNNSNSSNSLSPIVKL) shows a compositional bias: low complexity.

In terms of biological role, promotes the exchange of Ras-bound GDP by GTP. This chain is Ras guanine nucleotide exchange factor F (gefF), found in Dictyostelium discoideum (Social amoeba).